We begin with the raw amino-acid sequence, 554 residues long: Arginine--tRNA ligase (554 aa).

Residues 129-139 (ANPTGPLHIGH) carry the 'HIGH' region motif.

Belongs to the class-I aminoacyl-tRNA synthetase family. As to quaternary structure, monomer.

Its subcellular location is the cytoplasm. The enzyme catalyses tRNA(Arg) + L-arginine + ATP = L-arginyl-tRNA(Arg) + AMP + diphosphate. This Geobacter sp. (strain M21) protein is Arginine--tRNA ligase.